The chain runs to 651 residues: Acetyl-coenzyme A synthetase (651 aa).

CoA contacts are provided by residues 189 to 192 (RGGK), T311, and N335. ATP contacts are provided by residues 387 to 389 (GEP), 411 to 416 (DTWWQT), D500, and R515. S523 serves as a coordination point for CoA. R526 serves as a coordination point for ATP. 3 residues coordinate Mg(2+): V537, H539, and V542. A CoA-binding site is contributed by R586. Residue K611 is modified to N6-acetyllysine.

This sequence belongs to the ATP-dependent AMP-binding enzyme family. The cofactor is Mg(2+). In terms of processing, acetylated. Deacetylation by the SIR2-homolog deacetylase activates the enzyme.

It carries out the reaction acetate + ATP + CoA = acetyl-CoA + AMP + diphosphate. Functionally, catalyzes the conversion of acetate into acetyl-CoA (AcCoA), an essential intermediate at the junction of anabolic and catabolic pathways. AcsA undergoes a two-step reaction. In the first half reaction, AcsA combines acetate with ATP to form acetyl-adenylate (AcAMP) intermediate. In the second half reaction, it can then transfer the acetyl group from AcAMP to the sulfhydryl group of CoA, forming the product AcCoA. The protein is Acetyl-coenzyme A synthetase of Brucella suis (strain ATCC 23445 / NCTC 10510).